We begin with the raw amino-acid sequence, 858 residues long: Taste receptor type 1 member 3 (858 aa).

Residues Met-1–Gly-20 form the signal peptide. The Extracellular portion of the chain corresponds to Ser-21–Leu-575. N-linked (GlcNAc...) asparagine glycans are attached at residues Asn-85, Asn-130, Asn-203, Asn-264, Asn-379, Asn-387, Asn-418, Asn-439, and Asn-482. A helical membrane pass occupies residues Ser-576–Val-596. The Cytoplasmic segment spans residues His-597 to Ser-610. A helical membrane pass occupies residues Leu-611 to Gly-631. Residues Arg-632–Met-644 are Extracellular-facing. The helical transmembrane segment at Ala-645–Val-665 threads the bilayer. Residues Glu-666–Trp-687 lie on the Cytoplasmic side of the membrane. The chain crosses the membrane as a helical span at residues Leu-688–Phe-708. The Extracellular segment spans residues Pro-709–Leu-735. The chain crosses the membrane as a helical span at residues Gly-736–Val-756. The Cytoplasmic portion of the chain corresponds to Gln-757–Arg-767. Residues Gly-768–Ala-788 form a helical membrane-spanning segment. The Extracellular segment spans residues Asn-789–Pro-796. Residues Ala-797–Pro-817 form a helical membrane-spanning segment. Topologically, residues Lys-818 to Glu-858 are cytoplasmic. Residues Pro-839–Glu-858 form a disordered region.

This sequence belongs to the G-protein coupled receptor 3 family. TAS1R subfamily. As to quaternary structure, forms homodimers or heterodimers with TAS1R1 and TAS1R2.

The protein resides in the cell membrane. In terms of biological role, putative taste receptor. TAS1R1/TAS1R3 responds to the umami taste stimulus (the taste of monosodium glutamate) and also to most of the 20 standard L-amino acids, but not to their D-enantiomers or other compounds. TAS1R2/TAS1R3 recognizes diverse natural and synthetic sweeteners. TAS1R3 is essential for the recognition and response to the disaccharide trehalose. Sequence differences within and between species can significantly influence the selectivity and specificity of taste responses. The sequence is that of Taste receptor type 1 member 3 (Tas1r3) from Rattus norvegicus (Rat).